Consider the following 419-residue polypeptide: NFATC2-interacting protein (419 aa).

Disordered regions lie at residues 1–131 (MAEP…GKVK) and 151–215 (DEEE…HTRA). The span at 11 to 27 (WSGGSGAGRGGRGGWGG) shows a compositional bias: gly residues. Low complexity predominate over residues 35 to 51 (QRSPSRGTLDVVSVDLV). Serine 54, serine 84, serine 88, serine 90, serine 92, and serine 127 each carry phosphoserine. Glycyl lysine isopeptide (Lys-Gly) (interchain with G-Cter in SUMO2) cross-links involve residues lysine 129 and lysine 131. A compositionally biased stretch (basic and acidic residues) spans 180–192 (RTKDKEEKKKTEF). A phosphoserine mark is found at serine 198, serine 201, serine 204, serine 220, and serine 314. Residues 209 to 231 (SRTHTRALKKLSEVNKRLQDLRS) adopt a coiled-coil conformation. 2 positions are modified to phosphothreonine: threonine 316 and threonine 318. The 72-residue stretch at 348-419 (LQLRVQGKEK…ESGDLIEVWG (72 aa)) folds into the Ubiquitin-like domain. Phosphoserine is present on residues serine 369 and serine 390.

In terms of assembly, interacts with NFATC2, TRAF1, TRAF2 and PRMT1. Interacts with UBE2I/UBC9. Post-translationally, methylation at the N-terminus by PRMT1 modulates interaction with the NFAT complex and results in augmented cytokine production.

The protein resides in the nucleus. The protein localises to the cytoplasm. In T-helper 2 (Th2) cells, regulates the magnitude of NFAT-driven transcription of a specific subset of cytokine genes, including IL3, IL4, IL5 and IL13, but not IL2. Recruits PRMT1 to the IL4 promoter; this leads to enhancement of histone H4 'Arg-3'-methylation and facilitates subsequent histone acetylation at the IL4 locus, thus promotes robust cytokine expression. Down-regulates formation of poly-SUMO chains by UBE2I/UBC9. The protein is NFATC2-interacting protein (NFATC2IP) of Homo sapiens (Human).